The following is a 215-amino-acid chain: Tricarboxylate transporter ALT9 (215 aa).

2 Solcar repeats span residues 18 to 106 (TTVV…LAPM) and 111 to 197 (CGVS…VVRL). A run of 3 helical transmembrane segments spans residues 19–39 (TVVGNMVAGMCAGVAESVLVL), 112–132 (GVSTSVVAGALAGVITVYCTM), and 182–202 (VAGAIAFTLYEEVVRLTGFLV).

Belongs to the mitochondrial carrier (TC 2.A.29) family.

The protein localises to the mitochondrion inner membrane. The protein operates within mycotoxin biosynthesis. Functionally, tricarboxylate transporter; part of the gene cluster that mediates the biosynthesis of the host-selective toxins (HSTs) AAL-toxins, sphinganine-analog mycotoxins responsible for Alternaria stem canker on tomato by the tomato pathotype. The biosynthesis starts with the polyketide synthase ALT1-catalyzed C-16 carbon chain assembly from one starter acetyl-CoA unit with malonyl-CoA extender units. ALT1 also selectively transfers methyl groups at the first and the third cycle of chain elongation for AAL toxin. The C-16 polyketide chain is released from the enzyme by a nucleophilic attack of a carbanion, which is derived from R-carbon of glycin by decarboxylation, on the carbonyl carbon of polyketide acyl chain. This step is probably catalyzed by a pyridoxal 5'-phosphate-dependent aminoacyl transferase ALT4. The respective functions of the other enzymes encoded by the cluster have still to be elucidated. The sphingosine N-acyltransferase-like protein ALT7 seems not to act as a resistance/self-tolerance factor against the toxin in the toxin biosynthetic gene cluster, contrary to what is expected. In Alternaria alternata (Alternaria rot fungus), this protein is Tricarboxylate transporter ALT9.